Reading from the N-terminus, the 317-residue chain is Insulin-like growth factor-binding protein 2 (317 aa).

The first 33 residues, 1–33 (MQPRLGGPALLLLPPLLLLLLLGAGGGDCGARA), serve as a signal peptide directing secretion. One can recognise an IGFBP N-terminal domain in the interval 35–126 (VLFRCPPCTP…VHGEGTCEKH (92 aa)). Intrachain disulfides connect C39–C76, C42–C78, C50–C79, C68–C82, C90–C103, and C97–C123. Disordered stretches follow at residues 125 to 151 (KHGD…GGQV) and 189 to 218 (EQHR…ARTP). In terms of domain architecture, Thyroglobulin type-1 spans 216–298 (RTPCQQELDQ…APTIRGDPEC (83 aa)). 3 cysteine pairs are disulfide-bonded: C219–C253, C264–C275, and C277–C298. The Cell attachment site signature appears at 293–295 (RGD).

In terms of assembly, interacts with IGF1. Interacts with IGF2. Interacts (via RGD motif) with integrin alpha5/ITGA5; this interaction induces cell migration, adhesion or apoptosis according to the context. Interacts with PTPRB; this interaction leads to PTPRB dimerization and inactivation. In terms of processing, cleaved by MMP9 leading to release of free IGF2 from IGFBP2-IGF2 complex, which contributes to enhance the motility and the growth of astrocytes. Post-translationally, O-glycosylated. Expressed in abundance in selected adult tissues, namely liver, kidney, adrenal, pituitary and choroid plexus.

The protein resides in the secreted. Multifunctional protein that plays a critical role in regulating the availability of IGFs such as IGF1 and IGF2 to their receptors and thereby regulates IGF-mediated cellular processes including proliferation, differentiation, and apoptosis in a cell-type specific manner. Functions coordinately with receptor protein tyrosine phosphatase beta/PTPRB and the IGF1 receptor to regulate IGF1-mediated signaling by stimulating the phosphorylation of PTEN leading to its inactivation and AKT1 activation. Plays a positive role in cell migration via interaction with integrin alpha5/ITGA5 through an RGD motif. Additionally, interaction with ITGA5/ITGB1 enhances the adhesion of endothelial progenitor cells to endothelial cells. Upon mitochondrial damage, facilitates apoptosis with ITGA5 of podocytes, and then activates the phosphorylation of focal adhesion kinase (FAK)-mediated mitochondrial injury. In Ovis aries (Sheep), this protein is Insulin-like growth factor-binding protein 2 (IGFBP2).